The following is a 114-amino-acid chain: Immunomodulatory protein FIP-Fve (114 aa).

Ser-1 carries the post-translational modification N-acetylserine.

This sequence belongs to the fungal immunomodulatory protein (FIP) family. Homodimer.

Functionally, lectin with specificity for complex cell-surface carbohydrates. Possesses immunomodulatory activity, stimulates lymphocyte mitogenesis, suppresses systemic anaphylaxis reactions and edema, enhances transcription of IL-2, IFN-gamma and TNF-alpha and hemagglutinates red blood cells. The sequence is that of Immunomodulatory protein FIP-Fve from Flammulina velutipes (Agaricus velutipes).